Here is a 203-residue protein sequence, read N- to C-terminus: Cbp/p300-interacting transactivator 1 (203 aa).

Disordered regions lie at residues 1–24 (MPTM…DANQ) and 51–86 (TANG…PSFN). A compositionally biased stretch (low complexity) spans 61-84 (PTSSSGSTSPIGSPTATPSSKPPS). Positions 168 to 177 (LMSLVVELGL) match the Nuclear export signal motif.

The protein belongs to the CITED family. Homodimer. Binds to RBM14. Interacts (via N-terminus) with HSPA8; the interaction suppresses the association of CITED1 with p300/CBP and SMAD-mediated transcription transactivation. Interacts (via C-terminus) with TOX3 (via HGM box); the interaction increases estrogen-response element (ERE)-dependent transcription and protection against cell death. Interacts with ESR1; the interaction occurs in a estrogen-dependent manner. Interacts (unphosphorylated form preferentially and via C-terminus) with EP300. Interacts (via C-terminus) with CREBBP. Interacts with EGR2. Phosphorylated. Phosphorylation changes in a cell cycle-dependent manner and reduces its transcriptional cofactor activity. Expressed in calvarial osteoblasts. Expressed in nulliparous mammary epithelial cells; absent in pregnant mice and in lacting mammary glands. Also expressed in mammary tumors (at protein level). Expressed only in melanocytes and testis. Expressed at high levels in the strongly pigmented melanoma cells but at low levels in the weakly pigmented cells.

It localises to the nucleus. The protein localises to the cytoplasm. In terms of biological role, transcriptional coactivator of the p300/CBP-mediated transcription complex. Enhances SMAD-mediated transcription by strengthening the functional link between the DNA-binding SMAD transcription factors and the p300/CBP transcription coactivator complex. Stimulates estrogen-dependent transactivation activity mediated by estrogen receptors signaling; stabilizes the interaction of estrogen receptor ESR1 and histone acetyltransferase EP300. Positively regulates TGF-beta signaling through its association with the SMAD/p300/CBP-mediated transcriptional coactivator complex. Induces transcription from estrogen-responsive promoters and protection against cell death. Potentiates EGR2-mediated transcriptional activation activity from the ERBB2 promoter. Acts as an inhibitor of osteoblastic mineralization through a cAMP-dependent parathyroid hormone receptor signaling. May play a role in pigmentation of melanocytes. Associates with chromatin to the estrogen-responsive TGF-alpha promoter region in a estrogen-dependent manner. The protein is Cbp/p300-interacting transactivator 1 (Cited1) of Mus musculus (Mouse).